The sequence spans 124 residues: Heat-labile enterotoxin B chain (124 aa).

An N-terminal signal peptide occupies residues 1-21 (MNKVKCYVLFTALLSSLCAYG). Cysteines 30 and 107 form a disulfide.

As to quaternary structure, heterohexamer of one A chain and of five B chains.

Functionally, the biological activity of the toxin is produced by the A chain, which activates intracellular adenyl cyclase. This is Heat-labile enterotoxin B chain (eltB) from Escherichia coli O78:H11 (strain H10407 / ETEC).